Here is a 248-residue protein sequence, read N- to C-terminus: ATP synthase subunit a, chloroplastic (248 aa).

5 helical membrane passes run 38 to 58 (QVLI…TIAV), 96 to 116 (VPFI…GALL), 135 to 155 (INTT…AGLA), 200 to 220 (LVVA…VMFL), and 221 to 241 (GLFT…AYIG).

It belongs to the ATPase A chain family. F-type ATPases have 2 components, CF(1) - the catalytic core - and CF(0) - the membrane proton channel. CF(1) has five subunits: alpha(3), beta(3), gamma(1), delta(1), epsilon(1). CF(0) has four main subunits: a, b, b' and c.

It is found in the plastid. It localises to the chloroplast thylakoid membrane. Functionally, key component of the proton channel; it plays a direct role in the translocation of protons across the membrane. This Cycas taitungensis (Prince sago) protein is ATP synthase subunit a, chloroplastic.